Here is a 211-residue protein sequence, read N- to C-terminus: Thiamine-phosphate synthase (211 aa).

4-amino-2-methyl-5-(diphosphooxymethyl)pyrimidine contacts are provided by residues 37-41 (QLRIK) and asparagine 69. Aspartate 70 and aspartate 89 together coordinate Mg(2+). Residue serine 108 coordinates 4-amino-2-methyl-5-(diphosphooxymethyl)pyrimidine. 134–136 (TQT) provides a ligand contact to 2-[(2R,5Z)-2-carboxy-4-methylthiazol-5(2H)-ylidene]ethyl phosphate. 4-amino-2-methyl-5-(diphosphooxymethyl)pyrimidine is bound at residue lysine 137. 2-[(2R,5Z)-2-carboxy-4-methylthiazol-5(2H)-ylidene]ethyl phosphate is bound by residues glycine 166 and 186–187 (VS).

It belongs to the thiamine-phosphate synthase family. Mg(2+) serves as cofactor.

It catalyses the reaction 2-[(2R,5Z)-2-carboxy-4-methylthiazol-5(2H)-ylidene]ethyl phosphate + 4-amino-2-methyl-5-(diphosphooxymethyl)pyrimidine + 2 H(+) = thiamine phosphate + CO2 + diphosphate. It carries out the reaction 2-(2-carboxy-4-methylthiazol-5-yl)ethyl phosphate + 4-amino-2-methyl-5-(diphosphooxymethyl)pyrimidine + 2 H(+) = thiamine phosphate + CO2 + diphosphate. The catalysed reaction is 4-methyl-5-(2-phosphooxyethyl)-thiazole + 4-amino-2-methyl-5-(diphosphooxymethyl)pyrimidine + H(+) = thiamine phosphate + diphosphate. The protein operates within cofactor biosynthesis; thiamine diphosphate biosynthesis; thiamine phosphate from 4-amino-2-methyl-5-diphosphomethylpyrimidine and 4-methyl-5-(2-phosphoethyl)-thiazole: step 1/1. In terms of biological role, condenses 4-methyl-5-(beta-hydroxyethyl)thiazole monophosphate (THZ-P) and 2-methyl-4-amino-5-hydroxymethyl pyrimidine pyrophosphate (HMP-PP) to form thiamine monophosphate (TMP). This Escherichia coli O1:K1 / APEC protein is Thiamine-phosphate synthase.